The chain runs to 117 residues: Flagellar transcriptional regulator FlhD (117 aa).

This sequence belongs to the FlhD family. As to quaternary structure, homodimer; disulfide-linked. Forms a heterohexamer composed of two FlhC and four FlhD subunits. Each FlhC binds a FlhD dimer, forming a heterotrimer, and a hexamer assembles by dimerization of two heterotrimers.

The protein localises to the cytoplasm. In terms of biological role, functions in complex with FlhC as a master transcriptional regulator that regulates transcription of several flagellar and non-flagellar operons by binding to their promoter region. Activates expression of class 2 flagellar genes, including fliA, which is a flagellum-specific sigma factor that turns on the class 3 genes. Also regulates genes whose products function in a variety of physiological pathways. The protein is Flagellar transcriptional regulator FlhD of Erwinia amylovora (strain CFBP1430).